The chain runs to 271 residues: Tryptophan synthase alpha chain (271 aa).

Residues E49 and D60 each act as proton acceptor in the active site.

It belongs to the TrpA family. As to quaternary structure, tetramer of two alpha and two beta chains.

The catalysed reaction is (1S,2R)-1-C-(indol-3-yl)glycerol 3-phosphate + L-serine = D-glyceraldehyde 3-phosphate + L-tryptophan + H2O. It functions in the pathway amino-acid biosynthesis; L-tryptophan biosynthesis; L-tryptophan from chorismate: step 5/5. In terms of biological role, the alpha subunit is responsible for the aldol cleavage of indoleglycerol phosphate to indole and glyceraldehyde 3-phosphate. This is Tryptophan synthase alpha chain from Burkholderia cenocepacia (strain ATCC BAA-245 / DSM 16553 / LMG 16656 / NCTC 13227 / J2315 / CF5610) (Burkholderia cepacia (strain J2315)).